Reading from the N-terminus, the 282-residue chain is MSNKTIDLGSIEIANDKPFVLFGGMNVLESRDLAMQIAETYAEVTQKLGIPYVFKASFDKANRSSVNSYRGPGMEEGLKIFEEIKSTFNLPLITDVHEVHQCAPVAEVVDIIQLPAFLARQTDLVVAMAKTGAIINVKKPQFLAPHEMRHIISKFNEAGNDEIILCERGSSFGYNNLVVDMLGMDEMKQSGYPVIFDATHALQKPGGRSDSAGGRRAQATELARSGMALGLAGLFIEAHPDPDNAKCDGPCALPLHQLENYLTQMKAVDDLVKSFAPIDTSK.

It belongs to the KdsA family.

It localises to the cytoplasm. It catalyses the reaction D-arabinose 5-phosphate + phosphoenolpyruvate + H2O = 3-deoxy-alpha-D-manno-2-octulosonate-8-phosphate + phosphate. It functions in the pathway carbohydrate biosynthesis; 3-deoxy-D-manno-octulosonate biosynthesis; 3-deoxy-D-manno-octulosonate from D-ribulose 5-phosphate: step 2/3. Its pathway is bacterial outer membrane biogenesis; lipopolysaccharide biosynthesis. The protein is 2-dehydro-3-deoxyphosphooctonate aldolase of Shewanella piezotolerans (strain WP3 / JCM 13877).